The primary structure comprises 154 residues: Lipoprotein signal peptidase (154 aa).

2 consecutive transmembrane segments (helical) span residues 55–75 (GHMW…IYIM) and 84–104 (LFSI…IDRV). Active-site residues include Asp111 and Asp129. Residues 124-144 (IFNVADASLSVGVVLMLVYVF) traverse the membrane as a helical segment.

The protein belongs to the peptidase A8 family.

The protein localises to the cell membrane. It catalyses the reaction Release of signal peptides from bacterial membrane prolipoproteins. Hydrolyzes -Xaa-Yaa-Zaa-|-(S,diacylglyceryl)Cys-, in which Xaa is hydrophobic (preferably Leu), and Yaa (Ala or Ser) and Zaa (Gly or Ala) have small, neutral side chains.. The protein operates within protein modification; lipoprotein biosynthesis (signal peptide cleavage). In terms of biological role, this protein specifically catalyzes the removal of signal peptides from prolipoproteins. This chain is Lipoprotein signal peptidase, found in Listeria monocytogenes serovar 1/2a (strain ATCC BAA-679 / EGD-e).